Reading from the N-terminus, the 1212-residue chain is DNA-directed RNA polymerase subunit beta'' (1212 aa).

Residues Cys-229, Cys-302, Cys-309, and Cys-312 each contribute to the Zn(2+) site. Positions 1162-1212 (QKETSKNKKETSKNKKETSKNKKETSKNKKETSKNKKETSKNKKEASKNKK) are disordered.

The protein belongs to the RNA polymerase beta' chain family. RpoC2 subfamily. As to quaternary structure, in plastids the minimal PEP RNA polymerase catalytic core is composed of four subunits: alpha, beta, beta', and beta''. When a (nuclear-encoded) sigma factor is associated with the core the holoenzyme is formed, which can initiate transcription. It depends on Zn(2+) as a cofactor.

The protein localises to the plastid. It is found in the chloroplast. The enzyme catalyses RNA(n) + a ribonucleoside 5'-triphosphate = RNA(n+1) + diphosphate. DNA-dependent RNA polymerase catalyzes the transcription of DNA into RNA using the four ribonucleoside triphosphates as substrates. The protein is DNA-directed RNA polymerase subunit beta'' of Cryptomeria japonica (Japanese cedar).